The primary structure comprises 1189 residues: Pumilio homolog 1 (1189 aa).

Disordered regions lie at residues 24 to 65 (QHAQ…SSPV), 233 to 288 (SCLR…QNGI), 491 to 525 (QQTT…GQQT), 614 to 652 (AGTT…NNSL), and 743 to 774 (GPVG…SSLN). Residues 45-58 (QAQPQPAANQALAA) are compositionally biased toward low complexity. The segment covering 250–277 (NDKGDKKNKGTFDGDKLGDLKEEGDVMD) has biased composition (basic and acidic residues). Residues 491–503 (QQTTQQTQQGQQQ) are compositionally biased toward low complexity. Polar residues predominate over residues 512–525 (RPLTPNQNQQGQQT). Low complexity-rich tracts occupy residues 627–652 (QQPQ…NNSL) and 764–774 (LSSHGSSSSLN). In terms of domain architecture, PUM-HD spans 829–1171 (GRSRLLEDFR…HILAKLEKYY (343 aa)). Pumilio repeat units lie at residues 849-884 (EIAG…LVFN), 885-920 (EILQ…ALAE), 921-958 (RIRG…EMVR), 959-994 (ELDG…FIID), 995-1030 (AFKG…PILE), 1031-1066 (ELHQ…KIVA), 1067-1102 (EIRG…MLID), and 1106-1145 (TMND…IVMH). The interval 864–868 (SRFIQ) is adenine-nucleotide binding in RNA target. Positions 900 to 904 (NYVIQ) are uracil-nucleotide binding in RNA target. Residues 936 to 940 (CRVIQ) are adenine-nucleotide binding in RNA target. Positions 974–978 (NHVVQ) are non-specific-nucleotide binding in RNA target. Positions 1010–1014 (CRVIQ) are adenine-nucleotide binding in RNA target. Residues 1046-1050 (NYVIQ) are uracil-nucleotide binding in RNA target. 2 guanine-nucleotide binding in RNA target regions span residues 1082 to 1086 (SNVVE) and 1083 to 1086 (NVVE). Residues 1125-1129 (NYVVQ) form a uracil-nucleotide binding in RNA target region.

In terms of tissue distribution, detected in embryonic male and female gonads, heart, liver and muscle. Detected in adult brain, testis, ovary, heart, lung, spleen, kidney and muscle.

Its subcellular location is the cytoplasm. It is found in the P-body. The protein localises to the cytoplasmic granule. Functionally, sequence-specific RNA-binding protein that acts as a post-transcriptional repressor by binding the 3'-UTR of mRNA targets. Binds to an RNA consensus sequence, the Pumilio Response Element (PRE), 5'-UGUANAUA-3', that is related to the Nanos Response Element (NRE). Mediates post-transcriptional repression of transcripts via different mechanisms: acts via direct recruitment of the CCR4-POP2-NOT deadenylase leading to translational inhibition and mRNA degradation. Also mediates deadenylation-independent repression by promoting accessibility of miRNAs. The polypeptide is Pumilio homolog 1 (PUM1) (Gallus gallus (Chicken)).